A 1196-amino-acid chain; its full sequence is Nucleolar protein 6 (1196 aa).

Disordered stretches follow at residues 1 to 74 (MPGK…NVKP) and 1140 to 1196 (KREQ…KALK). Composition is skewed to basic and acidic residues over residues 22 to 31 (HAEDHSDLEH) and 65 to 74 (HRGDTKNVKP). Residues 1165-1187 (KPKKHGKRKGTGKAAPPKKKRLI) are compositionally biased toward basic residues.

Belongs to the NRAP family. Part of the small subunit (SSU) processome, composed of more than 70 proteins and the RNA chaperone small nucleolar RNA (snoRNA) U3.

The protein localises to the nucleus. It localises to the nucleolus. Its subcellular location is the chromosome. Its function is as follows. Part of the small subunit (SSU) processome, first precursor of the small eukaryotic ribosomal subunit. During the assembly of the SSU processome in the nucleolus, many ribosome biogenesis factors, an RNA chaperone and ribosomal proteins associate with the nascent pre-rRNA and work in concert to generate RNA folding, modifications, rearrangements and cleavage as well as targeted degradation of pre-ribosomal RNA by the RNA exosome. In Drosophila simulans (Fruit fly), this protein is Nucleolar protein 6.